A 270-amino-acid polypeptide reads, in one-letter code: Putative pyruvate, phosphate dikinase regulatory protein (270 aa).

150–157 (GPSRTSKS) provides a ligand contact to ADP.

It belongs to the pyruvate, phosphate/water dikinase regulatory protein family. PDRP subfamily.

It carries out the reaction N(tele)-phospho-L-histidyl/L-threonyl-[pyruvate, phosphate dikinase] + ADP = N(tele)-phospho-L-histidyl/O-phospho-L-threonyl-[pyruvate, phosphate dikinase] + AMP + H(+). The catalysed reaction is N(tele)-phospho-L-histidyl/O-phospho-L-threonyl-[pyruvate, phosphate dikinase] + phosphate + H(+) = N(tele)-phospho-L-histidyl/L-threonyl-[pyruvate, phosphate dikinase] + diphosphate. In terms of biological role, bifunctional serine/threonine kinase and phosphorylase involved in the regulation of the pyruvate, phosphate dikinase (PPDK) by catalyzing its phosphorylation/dephosphorylation. The protein is Putative pyruvate, phosphate dikinase regulatory protein of Neorickettsia sennetsu (strain ATCC VR-367 / Miyayama) (Ehrlichia sennetsu).